Consider the following 131-residue polypeptide: Protein FON2 SPARE1 (131 aa).

The N-terminal stretch at 1–22 is a signal peptide; that stretch reads MSRRLGAAAAVLLLWLAVLTFA. A disordered region spans residues 67 to 131; it reads SPSSLTTTDR…VPTGPNPLHH (65 aa). The span at 76 to 97 shows a compositional bias: basic residues; that stretch reads RHHHHHRHHGHHHHRGHDRWNR.

This sequence belongs to the CLV3/ESR signal peptide family. Expressed in all aerial apical meristems, including the floral and inflorescence meristems in the reproductive phase and the shoot apical meristem in the vegetative phase. Also detected in the primordia of lateral organs such as the leaf and the floral organs.

It is found in the secreted. Functionally, involved in the maintenance of the floral meristem and of the shoot apical meristem in the vegetative phase. Suppresses the fon2 mutation and acts independently of FON1. In Oryza sativa subsp. japonica, the protein has a single amino acid substitution at the putative processing site of the signal peptide and is inactive. The chain is Protein FON2 SPARE1 (FOS1) from Oryza sativa subsp. indica (Rice).